Consider the following 114-residue polypeptide: MMTEISVPLIFTDAAANKVKALISEEENPNLKLRVYITGGGCSGFQYGFTFDEKVNDGDLTIEKSGVHLVIDPMSLQYLIGGTVDYTEGLEGSRFVVNNPNASTTCGCGSSFSI.

Residues C42, C106, and C108 each coordinate iron-sulfur cluster.

Belongs to the HesB/IscA family. As to quaternary structure, homodimer. Iron-sulfur cluster is required as a cofactor.

Its function is as follows. Required for insertion of 4Fe-4S clusters for at least IspG. This Pasteurella multocida (strain Pm70) protein is Iron-sulfur cluster insertion protein ErpA.